The sequence spans 388 residues: Mannitol-1-phosphate 5-dehydrogenase (388 aa).

Residue 5 to 16 (AIQFGGGNIGRG) coordinates NAD(+). Lys213 is an active-site residue.

The protein belongs to the mannitol dehydrogenase family. As to quaternary structure, monomer.

It carries out the reaction D-mannitol 1-phosphate + NAD(+) = beta-D-fructose 6-phosphate + NADH + H(+). Its function is as follows. Catalyzes the NAD(H)-dependent interconversion of D-fructose 6-phosphate and D-mannitol 1-phosphate in the mannitol metabolic pathway. The polypeptide is Mannitol-1-phosphate 5-dehydrogenase (mpdA) (Aspergillus fumigatus (strain CBS 144.89 / FGSC A1163 / CEA10) (Neosartorya fumigata)).